We begin with the raw amino-acid sequence, 743 residues long: Neutral ceramidase (743 aa).

The Cytoplasmic segment spans residues 1–14 (MASKSRRLSGLEIS). The helical; Signal-anchor for type II membrane protein transmembrane segment at 15 to 35 (LIVLFLLMTAVSVALITVLAL) threads the bilayer. Residues 36–743 (KQESDKKEEV…FKVARSFYYF (708 aa)) lie on the Lumenal side of the membrane. The tract at residues 40 to 60 (DKKEEVTPEEPSPSVTPPEKP) is disordered. Residues 49–59 (EPSPSVTPPEK) are compositionally biased toward pro residues. Positions 151 and 260 each coordinate Zn(2+). N-linked (GlcNAc...) asparagine glycosylation is present at asparagine 265. Residue serine 312 is the Nucleophile of the active site. 2 disulfide bridges follow: cysteine 320–cysteine 334 and cysteine 327–cysteine 342. N-linked (GlcNAc...) asparagine glycosylation is found at asparagine 331, asparagine 389, asparagine 398, and asparagine 451. A disulfide bond links cysteine 406 and cysteine 456. Zn(2+) contacts are provided by glutamate 498 and tyrosine 538. Residue asparagine 661 is glycosylated (N-linked (GlcNAc...) asparagine). Aspartate 672, serine 674, and threonine 677 together coordinate Ca(2+). N-linked (GlcNAc...) asparagine glycosylation occurs at asparagine 720.

The protein belongs to the neutral ceramidase family. Zn(2+) is required as a cofactor. N-glycosylated. In terms of processing, O-glycosylated. As to expression, detected in intestine (at protein level).

The protein resides in the cell membrane. Its subcellular location is the membrane raft. It localises to the membrane. The protein localises to the caveola. It is found in the golgi apparatus membrane. The protein resides in the mitochondrion. Its subcellular location is the secreted. It localises to the extracellular exosome. The catalysed reaction is an N-acylsphing-4-enine + H2O = sphing-4-enine + a fatty acid. The enzyme catalyses N-dodecanoylsphing-4-enine + H2O = dodecanoate + sphing-4-enine. Its pathway is lipid metabolism; sphingolipid metabolism. Its function is as follows. Plasma membrane ceramidase that hydrolyzes sphingolipid ceramides into sphingosine and free fatty acids at neutral pH. Ceramides, sphingosine, and its phosphorylated form sphingosine-1-phosphate are bioactive lipids that mediate cellular signaling pathways regulating several biological processes including cell proliferation, apoptosis and differentiation. Also catalyzes the reverse reaction allowing the synthesis of ceramides from fatty acids and sphingosine. Together with sphingomyelinase, participates in the production of sphingosine and sphingosine-1-phosphate from the degradation of sphingomyelin, a sphingolipid enriched in the plasma membrane of cells. Also participates in the hydrolysis of ceramides from the extracellular milieu allowing the production of sphingosine-1-phosphate inside and outside cells. In Danio rerio (Zebrafish), this protein is Neutral ceramidase (asah2).